Consider the following 409-residue polypeptide: Autotransproter heptosyltransferase BAHTCr (409 aa).

Positions 107, 108, and 109 each coordinate ADP-D-glycero-beta-D-manno-heptose. The Proton acceptor role is filled by aspartate 110. Glutamine 224, threonine 226, lysine 230, arginine 257, glycine 302, and glutamate 326 together coordinate ADP-D-glycero-beta-D-manno-heptose. Fe(3+) is bound by residues cysteine 339, cysteine 342, cysteine 358, and cysteine 370.

This sequence belongs to the glycosyltransferase 9 family. In terms of assembly, homododecamer composed of 6 homodimers forming a ring. Fe(3+) serves as cofactor.

The protein resides in the cytoplasm. It catalyses the reaction ADP-D-glycero-beta-D-manno-heptose + L-seryl-[protein] = O-(D-glycero-alpha-D-manno-heptosyl)-L-seryl-[protein] + ADP + H(+). The enzyme catalyses ADP-L-glycero-beta-D-manno-heptose + L-seryl-[protein] = O-(L-glycero-alpha-D-manno-heptosyl)-L-seryl-[protein] + ADP + H(+). Its function is as follows. Glycosylates autotransporter CARC. By glycosylating CARC, involved in the colonization of the mouse host gastrointestinal tract. This is Autotransproter heptosyltransferase BAHTCr from Citrobacter rodentium (strain ICC168) (Citrobacter freundii biotype 4280).